A 417-amino-acid polypeptide reads, in one-letter code: Phosphatidylcholine:ceramide cholinephosphotransferase 1 (417 aa).

An SAM domain is found at 11–74; sequence WSPEEVTNWL…LHMIETLKMA (64 aa). 5 helical membrane passes run 140–160, 188–208, 219–239, 280–300, and 308–328; these read FLAF…ISVV, FSIC…QWLL, FFCI…VTTL, MCGD…YLFI, and LWWY…CILL. Histidine 289 is a catalytic residue. Residues 329–417 are Cytoplasmic-facing; that stretch reads AHDHYTVDVV…VKYSRLVNDT (89 aa). Residues histidine 332 and aspartate 336 contribute to the active site.

The protein belongs to the sphingomyelin synthase family.

The protein localises to the golgi apparatus membrane. The catalysed reaction is an N-acylsphing-4-enine + a 1,2-diacyl-sn-glycero-3-phosphocholine = a sphingomyelin + a 1,2-diacyl-sn-glycerol. It catalyses the reaction an N-acylsphing-4-enine + a 1,2-diacyl-sn-glycero-3-phosphoethanolamine = an N-acylsphing-4-enine 1-phosphoethanolamine + a 1,2-diacyl-sn-glycerol. Major sphingomyelin synthase at the Golgi apparatus. Catalyzes the reversible transfer of phosphocholine moiety in sphingomyelin biosynthesis: in the forward reaction transfers phosphocholine head group of phosphatidylcholine (PC) on to ceramide (CER) to form ceramide phosphocholine (sphingomyelin, SM) and diacylglycerol (DAG) as by-product, and in the reverse reaction transfers phosphocholine from SM to DAG to form PC and CER. The direction of the reaction depends on the levels of CER and DAG in Golgi membranes. Converts the newly synthesized CER, that is transported from the endoplasmic reticulum to the trans-Golgi by the Cer transport protein (CERT), to SM. Can form a heteromeric complex with glucosylceramide synthase (GCS) increasing SMS activity and reducing glucosylceramide synthesis, a critical mechanism that controls the metabolic fate of CER in the Golgi. Does not use free phosphorylcholine or CDP-choline as donor. Can also transfer phosphoethanolamine head group of phosphatidylethanolamine (PE) on to CER to form ceramide phosphoethanolamine (CPE). Regulates receptor-mediated signal transduction via mitogenic DAG and proapoptotic CER, as well as via SM, a structural component of membrane rafts that serve as platforms for signal transduction and protein sorting. Plays a role in secretory transport via regulation of DAG pool at the Golgi apparatus and its downstream effects on PRKD1. This Gallus gallus (Chicken) protein is Phosphatidylcholine:ceramide cholinephosphotransferase 1 (SGMS1).